Consider the following 373-residue polypeptide: GTPase Obg (373 aa).

The region spanning 1-159 (MKFIDEARIE…RMVRLELKVL (159 aa)) is the Obg domain. Residues 128–147 (LHFKSSTNRAPRQKTDGKPG) are disordered. An OBG-type G domain is found at 160-334 (ADVGLLGMPN…LCYAVFDHIS (175 aa)). Residues 166 to 173 (GMPNAGKS), 191 to 195 (FTTLA), 213 to 216 (DIPG), 284 to 287 (NKLD), and 315 to 317 (SAL) contribute to the GTP site. Mg(2+)-binding residues include Ser-173 and Thr-193. Positions 354-373 (FREKPQAPAAADDAGTDPQV) are disordered. Low complexity predominate over residues 359 to 373 (QAPAAADDAGTDPQV).

This sequence belongs to the TRAFAC class OBG-HflX-like GTPase superfamily. OBG GTPase family. Monomer. The cofactor is Mg(2+).

It is found in the cytoplasm. Functionally, an essential GTPase which binds GTP, GDP and possibly (p)ppGpp with moderate affinity, with high nucleotide exchange rates and a fairly low GTP hydrolysis rate. Plays a role in control of the cell cycle, stress response, ribosome biogenesis and in those bacteria that undergo differentiation, in morphogenesis control. In Paraburkholderia phytofirmans (strain DSM 17436 / LMG 22146 / PsJN) (Burkholderia phytofirmans), this protein is GTPase Obg.